The sequence spans 588 residues: MMRTHYCGALNRNNIGQDVTLSGWVHRRRDLGGLIFIDMRDRDGIVQVCFDPKYQDALTAAAGLRNEFCIQIKGEVIARPENQINKNMATGEVEVLAKELRIYNASDVLPLDFNQNNTEEQRLKYRYLDLRRPEMAQRLKTRAKITSFVRRFMDDNGFLDIETPMLTKATPEGARDYLVPSRVHKGKFYALPQSPQLFKQLLMMSGFDRYYQIVKCFRDEDLRADRQPEFTQIDVETSFLTAPEVREIMERMVHDLWLDTIGVDLGKFPVMTWQEAMRRFGSDKPDLRNPLEMVDVADIVKDVEFKVFNEPANNPNGRVAVIRVPNGAEITRKQIDEYTQFVGIYGAKGLAWAKVNDINAGLEGVQSPIAKFLNEEVWKALAERVNAQTGDILFFGADKWQTTTDAMGALRLKLGCDLGLTRLDEWQPLWVIDFPMFERDEEGNLAAMHHPFTSPKDFSPEQLEADPTSAVANAYDMVINGYEVGGGSVRIFDPKMQQTVFRILGIDEEQQREKFGFLLDALKFGTPPHAGLAFGLDRLTMLLTGTENIRDVIAFPKTTAAACLMTEAPSFVNPQALEELAISVVKAE.

L-aspartate is bound at residue Glu172. The interval 196–199 is aspartate; that stretch reads QLFK. Residue Arg218 participates in L-aspartate binding. ATP is bound by residues 218 to 220 and Gln227; that span reads RDE. His449 serves as a coordination point for L-aspartate. Glu483 contributes to the ATP binding site. Residue Arg490 coordinates L-aspartate. 535–538 provides a ligand contact to ATP; the sequence is GLDR.

This sequence belongs to the class-II aminoacyl-tRNA synthetase family. Type 1 subfamily. Homodimer.

It is found in the cytoplasm. It carries out the reaction tRNA(Asp) + L-aspartate + ATP = L-aspartyl-tRNA(Asp) + AMP + diphosphate. In terms of biological role, catalyzes the attachment of L-aspartate to tRNA(Asp) in a two-step reaction: L-aspartate is first activated by ATP to form Asp-AMP and then transferred to the acceptor end of tRNA(Asp). The polypeptide is Aspartate--tRNA ligase (Haemophilus influenzae (strain 86-028NP)).